The primary structure comprises 154 residues: 17 kDa surface antigen (154 aa).

The signal sequence occupies residues 1-19; it reads MKLLSKIMIIALAASTLQA. The N-palmitoyl cysteine moiety is linked to residue Cys20. Cys20 carries S-diacylglycerol cysteine lipidation.

Belongs to the rickettsiale 17 kDa surface antigen family.

It localises to the cell outer membrane. The protein is 17 kDa surface antigen (omp) of Rickettsia amblyommatis (Rickettsia amblyommii).